The chain runs to 223 residues: Endonuclease V (223 aa).

Positions 45 and 113 each coordinate Mg(2+).

Belongs to the endonuclease V family. It depends on Mg(2+) as a cofactor.

The protein localises to the cytoplasm. It carries out the reaction Endonucleolytic cleavage at apurinic or apyrimidinic sites to products with a 5'-phosphate.. Functionally, DNA repair enzyme involved in the repair of deaminated bases. Selectively cleaves double-stranded DNA at the second phosphodiester bond 3' to a deoxyinosine leaving behind the intact lesion on the nicked DNA. In Dehalococcoides mccartyi (strain CBDB1), this protein is Endonuclease V.